Here is a 619-residue protein sequence, read N- to C-terminus: Sodium-dependent dopamine transporter (619 aa).

The Cytoplasmic portion of the chain corresponds to 1–56 (MSKSKCSVGPMSSVVAPAKESNAVGPREVELILVKEQNGVQLTNSTLINPPQTPVE). Residues 57 to 95 (AQERETWSKKIDFLLSVIGFAVDLANVWRFPYLCYKNGG) form a discontinuously helical membrane-spanning segment. Glycine 75, alanine 77, valine 78, aspartate 79, and asparagine 82 together coordinate Na(+). A dopamine-binding site is contributed by aspartate 79. 2 helical membrane passes run 96–127 (GAFL…NREG) and 128–171 (AAGV…FSSF). Positions 149 and 153 each coordinate dopamine. Topologically, residues 172-235 (TMDLPWIHCN…SRGIDDLGPP (64 aa)) are extracellular. An intrachain disulfide couples cysteine 180 to cysteine 189. N-linked (GlcNAc...) asparagine glycans are attached at residues asparagine 181, asparagine 188, asparagine 196, and asparagine 204. Helical transmembrane passes span 236–255 (RWQL…FSLW) and 256–286 (KGVK…GVTL). At 287–305 (PGAMDGIRAYLSVDFYRLC) the chain is on the extracellular side. The chain crosses the membrane as a discontinuously helical span at residues 306–334 (EASVWIDAATQVCFSLGVGFGVLIAFSSY). Chloride is bound at residue glutamine 316. Phenylalanine 319 contributes to the dopamine binding site. Na(+)-binding residues include serine 320 and asparagine 352. Chloride is bound at residue serine 320. The helical transmembrane segment at 335 to 375 (NKFTNNCYRDAIITTSINSLTSFSSGFVVFSFLGYMAQKHN) threads the bilayer. Serine 356 contacts chloride. The Extracellular segment spans residues 376-399 (VPIRDVATDGPGLIFIIYPEAIAT). 3 consecutive transmembrane segments (helical) span residues 400–441 (LPLS…QLLH), 442–465 (RHRE…CVTN), and 466–498 (GGIY…AWFY). Na(+) is bound by residues leucine 417, aspartate 420, and serine 421. Residues serine 421 and alanine 422 each contribute to the dopamine site. At 499-515 (GVQQFSDDIKQMTGQRP) the chain is on the cytoplasmic side. Residues 516–541 (NLYWRLCWKLVSPCFLLYVVVVSIVT) traverse the membrane as a helical segment. At 542 to 552 (FRPPHYGAYIF) the chain is on the extracellular side. A helical membrane pass occupies residues 553-582 (PDWANALGWIIATSSMAMVPIYATYKFCSL). Residues 560-589 (GWIIATSSMAMVPIYATYKFCSLPGSFREK) are interaction with TGFB1I1. Residues 583 to 619 (PGSFREKLAYAITPEKDHQLVDRGEVRQFTLRHWLLL) lie on the Cytoplasmic side of the membrane.

The protein belongs to the sodium:neurotransmitter symporter (SNF) (TC 2.A.22) family. SLC6A3 subfamily. In terms of assembly, monomer. Homooligomer; disulfide-linked. Interacts with PRKCABP and TGFB1I1. Interacts (via N-terminus) with SYNGR3 (via N-terminus). Interacts with SLC18A2. Interacts with TOR1A (ATP-bound); TOR1A regulates SLC6A3 subcellular location. Interacts with alpha-synuclein/SNCA. Interacts with SEPTIN4. Brain. Expressed in the substantia nigra and ventral tegmental area, regions that contain dopaminergic cell bodies.

Its subcellular location is the cell membrane. The protein resides in the cell projection. It is found in the neuron projection. It localises to the axon. It carries out the reaction dopamine(out) + chloride(out) + Na(+)(out) = dopamine(in) + chloride(in) + Na(+)(in). It catalyses the reaction (R)-noradrenaline(out) + chloride(out) + Na(+)(out) = (R)-noradrenaline(in) + chloride(in) + Na(+)(in). The enzyme catalyses dopamine(out) + chloride(out) + 2 Na(+)(out) = dopamine(in) + chloride(in) + 2 Na(+)(in). Inhibited by mazindol, cocaine, desipramine, GBR 12783 dihydrochloride, GBR 12909 dihydrochloride and nomifensine. Inhibited by zinc ions. Functionally, mediates sodium- and chloride-dependent transport of dopamine. Also mediates sodium- and chloride-dependent transport of norepinephrine (also known as noradrenaline). Regulator of light-dependent retinal hyaloid vessel regression, downstream of OPN5 signaling. The polypeptide is Sodium-dependent dopamine transporter (Slc6a3) (Rattus norvegicus (Rat)).